The sequence spans 634 residues: Polyadenylate-binding protein 1A (634 aa).

RRM domains are found at residues 11-89, 99-175, 191-268, and 294-370; these read ASLY…WSQR, GNIF…RFKS, TNVY…RAQK, and VNLY…LAQR. Residues 541-618 enclose the PABC domain; the sequence is QEPLTASMLA…AVAVLQAHQA (78 aa).

The protein belongs to the polyadenylate-binding protein type-1 family. Interacts with ybx1; interaction recruits pabpc1a on C5-methylcytosine (m5C)-containing mRNAs, preventing their degradation.

Its subcellular location is the cytoplasm. Its function is as follows. Binds the poly(A) tail of mRNA. Prevents mRNA deadenylation and confers poly(A) stability. Binds to N6-methyladenosine (m6A)-containing mRNAs. Stimulates the translation of mRNAs to which it is bound, acting, at least in part, with dazl. Involved in the maternal-to-zygotic transition in early embryo via interaction with ybx1: interaction recruits pabpc1a on C5-methylcytosine (m5C)-containing maternal mRNAs, preventing their degradation. This chain is Polyadenylate-binding protein 1A, found in Danio rerio (Zebrafish).